The primary structure comprises 179 residues: Repressor of phase 1 flagellin gene (179 aa).

Its function is as follows. Transcriptional repressor of the FliC phase-1 flagellin. The chain is Repressor of phase 1 flagellin gene (fljA) from Salmonella typhimurium (strain LT2 / SGSC1412 / ATCC 700720).